The following is a 472-amino-acid chain: Ribulose bisphosphate carboxylase large chain 1 (472 aa).

Substrate-binding residues include Asn-115 and Thr-165. The active-site Proton acceptor is Lys-167. A substrate-binding site is contributed by Lys-169. Mg(2+) contacts are provided by Lys-193, Asp-195, and Glu-196. Lys-193 bears the N6-carboxylysine mark. His-286 acts as the Proton acceptor in catalysis. Residues Arg-287, His-319, and Ser-371 each coordinate substrate.

This sequence belongs to the RuBisCO large chain family. Type I subfamily. In terms of assembly, heterohexadecamer of 8 large chains and 8 small chains. The cofactor is Mg(2+).

The enzyme catalyses 2 (2R)-3-phosphoglycerate + 2 H(+) = D-ribulose 1,5-bisphosphate + CO2 + H2O. The catalysed reaction is D-ribulose 1,5-bisphosphate + O2 = 2-phosphoglycolate + (2R)-3-phosphoglycerate + 2 H(+). Functionally, ruBisCO catalyzes two reactions: the carboxylation of D-ribulose 1,5-bisphosphate, the primary event in carbon dioxide fixation, as well as the oxidative fragmentation of the pentose substrate. Both reactions occur simultaneously and in competition at the same active site. The sequence is that of Ribulose bisphosphate carboxylase large chain 1 from Rhodopseudomonas palustris (strain BisB5).